The chain runs to 817 residues: Verprolin (817 aa).

The segment covering 1–15 (MAGAPAPPPPPPPPA) has biased composition (pro residues). The tract at residues 1-752 (MAGAPAPPPP…THTNQPDVDV (752 aa)) is disordered. A WH2 1 domain is found at 30–47 (GRDALLGDIRKGMKLKKA). Over residues 37–51 (DIRKGMKLKKAETND) the composition is skewed to basic and acidic residues. Over residues 62 to 79 (VSSASGSSGTVSSKGPSM) the composition is skewed to low complexity. Residues 87–106 (MGAPQLGDILAGGIPKLKHI) enclose the WH2 2 domain. N-linked (GlcNAc...) asparagine glycosylation occurs at Asn-109. The segment covering 119-180 (SAPPIPGAVP…VPSSPAPPLP (62 aa)) has biased composition (pro residues). The N-linked (GlcNAc...) asparagine glycan is linked to Asn-212. Positions 236–245 (PQAPPPPPTP) are enriched in pro residues. Residues 254–265 (IKPTDNAVSPPS) show a composition bias toward polar residues. Pro residues predominate over residues 306-335 (SQPPLPSSAPPIPTSHAPPLPPTAPPPPSL). Low complexity predominate over residues 336 to 348 (PNVTSAPKKATSA). A glycan (N-linked (GlcNAc...) asparagine) is linked at Asn-337. The span at 372–382 (PVPPTLAPPLP) shows a compositional bias: pro residues. Asn-383 carries N-linked (GlcNAc...) asparagine glycosylation. Residues 383 to 395 (NTTSVPPNKASSM) show a composition bias toward low complexity. Over residues 396 to 407 (PAPPPPPPPPPG) the composition is skewed to pro residues. Positions 408–422 (AFSTSSALSASSIPL) are enriched in low complexity. Residues 423 to 432 (APLPPPPPPS) show a composition bias toward pro residues. Residues 447–469 (LTTNKPSASSKQSKISSSSSSSA) are compositionally biased toward low complexity. Over residues 502-516 (DKQEDVIGSSKDDNV) the composition is skewed to basic and acidic residues. Residues 518 to 534 (PSPISPSINPPKQSSQN) are compositionally biased toward low complexity. A Phosphoserine modification is found at Ser-519. Pro residues predominate over residues 557-579 (APPPHTDAMAPPLPPSAPPPPIT). The segment covering 588 to 597 (GDDHTNDKSE) has biased composition (basic and acidic residues). Residues 649-661 (PPSPPVAAAPPLP) show a composition bias toward pro residues. Residues 713–737 (MDTGTSNSPSKNLKQRLFSTGGSTL) are compositionally biased toward polar residues. At Ser-762 the chain carries Phosphoserine. N-linked (GlcNAc...) asparagine glycosylation is found at Asn-784 and Asn-796. The interval 786–806 (SQMPKPRPFQNKTKLYPSGKG) is disordered.

The protein belongs to the verprolin family. In terms of processing, N-glycosylated.

The protein resides in the cytoplasm. It localises to the cytoskeleton. Functionally, involved in cytoskeletal organization and cellular growth. May exert its effects on the cytoskeleton directly, or indirectly via proline-binding proteins (e.g. profilin) or proteins possessing SH3 domains. The chain is Verprolin (VRP1) from Saccharomyces cerevisiae (strain ATCC 204508 / S288c) (Baker's yeast).